Consider the following 509-residue polypeptide: Aspartic proteinase oryzasin-1 (509 aa).

A signal peptide spans Met-1 to Ala-24. Positions Ala-25–Gly-67 are cleaved as a propeptide — activation peptide. The Peptidase A1 domain maps to Tyr-85–Ala-506. Residue Asp-103 is part of the active site. Cys-116 and Cys-122 are disulfide-bonded. An N-linked (GlcNAc...) asparagine glycan is attached at Asn-252. Cys-281 and Cys-285 are disulfide-bonded. The active site involves Asp-290. The Saposin B-type domain occupies Val-315–Pro-420. Cystine bridges form between Cys-320-Cys-414, Cys-345-Cys-386, Cys-351-Cys-383, and Cys-428-Cys-465. N-linked (GlcNAc...) asparagine glycosylation occurs at Asn-400.

It belongs to the peptidase A1 family.

It localises to the vacuole. Functionally, involved in the breakdown of propeptides of storage proteins in protein-storage vacuoles. This is Aspartic proteinase oryzasin-1 from Oryza sativa subsp. japonica (Rice).